The following is a 205-amino-acid chain: Putative 3-methyladenine DNA glycosylase (205 aa).

It belongs to the DNA glycosylase MPG family.

This is Putative 3-methyladenine DNA glycosylase from Bacillus cereus (strain Q1).